We begin with the raw amino-acid sequence, 688 residues long: TBC1 domain family member 25 (688 aa).

The interval 1–27 (MATASGASDLSGSGAPPPGVGAQAAAA) is disordered. S140 carries the phosphoserine modification. T160 bears the Phosphothreonine mark. The 207-residue stretch at 228–434 (GVEPSLRKVV…RMLEVTWSSL (207 aa)) folds into the Rab-GAP TBC domain. The residue at position 506 (S506) is a Phosphoserine. Low complexity predominate over residues 544-567 (LNSPDPLLSSFSHPDSPSSSSPPS). The segment at 544-606 (LNSPDPLLSS…LPPVPPMGLP (63 aa)) is disordered. The segment covering 596-606 (SLPPVPPMGLP) has biased composition (pro residues).

In terms of assembly, interacts (via N-terminus) with MAP1LC3B, GABARAP and GABARAPL2.

Its subcellular location is the cytoplasm. The protein localises to the cytoplasmic vesicle. It is found in the autophagosome. Functionally, acts as a GTPase-activating protein specific for RAB33B. Involved in the regulation of autophagosome maturation, the process in which autophagosomes fuse with endosomes and lysosomes. In Homo sapiens (Human), this protein is TBC1 domain family member 25 (TBC1D25).